Here is a 495-residue protein sequence, read N- to C-terminus: MRINPTTSGPAVSTLEEKNVGRIAQIIGPVLDVVFPPGKMPNIYNALVVKGRDTVGQQINVTCEVQQLLGNNRVRAVAMSATDGLTRGMEVIDTRAPLSVPVGGATLGRIFNVLGEPVDNLGPVDTRTTSPIHRSAPAFIQLDTELSIFETGIKVVDLLAPYRRGGKIGLFGGAGVGKTVLIMELIYNIAKAHGGVSVFGGVGVRTREGNDLYMEMKESGVINEKNIAESKVALVYGQMNEPPGARMRVGLTALTMAEYFRDVNEQDVLLFIDNIFRFVQAGSEVSALLGRMPSAVGYQPTLSTEMGSLQERITSTKEGSITSIQAVYVPADDLTDPAPATTFAHLDATTVLSRGLAAKGIYPAVDPLGSTSTMLQPRIVGEEHYETAQRVKQTLQRYKELQDIIAILGLDELSEEDRLTVARARKIERFLSQPFFVAEVFTGSPGKYVGLAETIRGFQLILSGELDGLPEQAFYLVGNIDEATAKAMNLEGEKK.

172–179 (GGAGVGKT) contacts ATP.

The protein belongs to the ATPase alpha/beta chains family. F-type ATPases have 2 components, CF(1) - the catalytic core - and CF(0) - the membrane proton channel. CF(1) has five subunits: alpha(3), beta(3), gamma(1), delta(1), epsilon(1). CF(0) has four main subunits: a(1), b(1), b'(1) and c(9-12).

It is found in the plastid. The protein localises to the chloroplast thylakoid membrane. It carries out the reaction ATP + H2O + 4 H(+)(in) = ADP + phosphate + 5 H(+)(out). Its function is as follows. Produces ATP from ADP in the presence of a proton gradient across the membrane. The catalytic sites are hosted primarily by the beta subunits. This is ATP synthase subunit beta, chloroplastic from Pseudogaltonia clavata (Cape hyacinth).